The primary structure comprises 182 residues: MSELTTIARPYAKAVFDFAVEQSEKDKSTVEKWANMLEFLSELIRHDKVQTYLTSTSSTFKLADTVISICSEQLDQYGQNLVRLMAENKRLSVLPAVFNEFKSYVEEYKSLSQVEVISAQQLNDVQQQKIITAMEKRLARKVILNCRIDSSLIAGAIIRTNDFVIDGSCRGQINRLANELRL.

This sequence belongs to the ATPase delta chain family. As to quaternary structure, F-type ATPases have 2 components, F(1) - the catalytic core - and F(0) - the membrane proton channel. F(1) has five subunits: alpha(3), beta(3), gamma(1), delta(1), epsilon(1). F(0) has three main subunits: a(1), b(2) and c(10-14). The alpha and beta chains form an alternating ring which encloses part of the gamma chain. F(1) is attached to F(0) by a central stalk formed by the gamma and epsilon chains, while a peripheral stalk is formed by the delta and b chains.

It is found in the cell inner membrane. Its function is as follows. F(1)F(0) ATP synthase produces ATP from ADP in the presence of a proton or sodium gradient. F-type ATPases consist of two structural domains, F(1) containing the extramembraneous catalytic core and F(0) containing the membrane proton channel, linked together by a central stalk and a peripheral stalk. During catalysis, ATP synthesis in the catalytic domain of F(1) is coupled via a rotary mechanism of the central stalk subunits to proton translocation. This protein is part of the stalk that links CF(0) to CF(1). It either transmits conformational changes from CF(0) to CF(1) or is implicated in proton conduction. The sequence is that of ATP synthase subunit delta from Histophilus somni (strain 129Pt) (Haemophilus somnus).